The primary structure comprises 37 residues: Protamine Z3 (37 aa).

The interval Ala-1–Arg-37 is disordered.

As to expression, testis.

It is found in the nucleus. Its subcellular location is the chromosome. In terms of biological role, protamines substitute for histones in the chromatin of sperm during the haploid phase of spermatogenesis. They compact sperm DNA into a highly condensed, stable and inactive complex. The protein is Protamine Z3 of Scyliorhinus canicula (Small-spotted catshark).